The chain runs to 333 residues: Autoinducer 2 import system permease protein LsrD (333 aa).

10 helical membrane-spanning segments follow: residues Tyr7–Ala27, Ile45–Ile65, Thr70–Ala90, Ala91–Leu111, Leu118–Ile138, Leu162–Phe182, Thr212–Val232, Ser240–Asn260, Ile261–Leu281, and Ala288–Val308.

It belongs to the binding-protein-dependent transport system permease family. AraH/RbsC subfamily. The complex is composed of two ATP-binding proteins (LsrA), two transmembrane proteins (LsrC and LsrD) and a solute-binding protein (LsrB).

It is found in the cell inner membrane. Its function is as follows. Part of the ABC transporter complex LsrABCD involved in autoinducer 2 (AI-2) import. Probably responsible for the translocation of the substrate across the membrane. This chain is Autoinducer 2 import system permease protein LsrD (lsrD), found in Photorhabdus laumondii subsp. laumondii (strain DSM 15139 / CIP 105565 / TT01) (Photorhabdus luminescens subsp. laumondii).